Reading from the N-terminus, the 431-residue chain is Adenylosuccinate synthetase (431 aa).

GTP is bound by residues 12-18 and 40-42; these read GDEGKGK and GHT. Asp-13 (proton acceptor) is an active-site residue. Residues Asp-13 and Gly-40 each coordinate Mg(2+). Residues 13–16, 38–41, Thr-131, Arg-145, Gln-225, Thr-240, and Arg-304 contribute to the IMP site; these read DEGK and NAGH. The Proton donor role is filled by His-41. 300–306 contributes to the substrate binding site; it reads TTTGRKR. GTP is bound by residues Arg-306, 332 to 334, and 414 to 416; these read KLD and STS.

This sequence belongs to the adenylosuccinate synthetase family. Homodimer. Mg(2+) serves as cofactor.

It localises to the cytoplasm. The catalysed reaction is IMP + L-aspartate + GTP = N(6)-(1,2-dicarboxyethyl)-AMP + GDP + phosphate + 2 H(+). Its pathway is purine metabolism; AMP biosynthesis via de novo pathway; AMP from IMP: step 1/2. Its function is as follows. Plays an important role in the de novo pathway of purine nucleotide biosynthesis. Catalyzes the first committed step in the biosynthesis of AMP from IMP. In Dinoroseobacter shibae (strain DSM 16493 / NCIMB 14021 / DFL 12), this protein is Adenylosuccinate synthetase.